The following is a 595-amino-acid chain: DNA mismatch repair protein MutL (595 aa).

Belongs to the DNA mismatch repair MutL/HexB family.

This protein is involved in the repair of mismatches in DNA. It is required for dam-dependent methyl-directed DNA mismatch repair. May act as a 'molecular matchmaker', a protein that promotes the formation of a stable complex between two or more DNA-binding proteins in an ATP-dependent manner without itself being part of a final effector complex. The polypeptide is DNA mismatch repair protein MutL (Rhodopseudomonas palustris (strain TIE-1)).